A 113-amino-acid polypeptide reads, in one-letter code: Hydrogenase maturation factor HypA (113 aa).

His-2 is a Ni(2+) binding site. Zn(2+) is bound by residues Cys-73, Cys-76, Cys-89, and Cys-92.

This sequence belongs to the HypA/HybF family.

Functionally, involved in the maturation of [NiFe] hydrogenases. Required for nickel insertion into the metal center of the hydrogenase. This chain is Hydrogenase maturation factor HypA, found in Rhodopseudomonas palustris (strain BisB5).